A 487-amino-acid chain; its full sequence is Glucose starvation modulator protein 1 (487 aa).

A disordered region spans residues 1–75 (MSIRFPEIPG…KRLTPQEKKA (75 aa)). A compositionally biased stretch (polar residues) spans 59-68 (SFSSSMTKRL). Positions 83–111 (CVFCHSKHLQCSHSRPCQNCIKRNLAHEC) form a DNA-binding region, zn(2)-C6 fungal-type. Residues 122 to 139 (MSTTEVPAVSGESSSESG) show a composition bias toward polar residues. A disordered region spans residues 122–158 (MSTTEVPAVSGESSSESGRATGENGSEMGNPPDPQIA). Residues 348-420 (CLLDYENLSR…FRLFESVAVG (73 aa)) enclose the PAS domain.

Belongs to the ERT1/acuK family.

It is found in the nucleus. Transcription factor which regulates nonfermentable carbon utilization. This Clavispora lusitaniae (strain ATCC 42720) (Yeast) protein is Glucose starvation modulator protein 1 (GSM1).